The primary structure comprises 120 residues: Large ribosomal subunit protein uL18 (120 aa).

It belongs to the universal ribosomal protein uL18 family. In terms of assembly, part of the 50S ribosomal subunit; part of the 5S rRNA/L5/L18/L25 subcomplex. Contacts the 5S and 23S rRNAs.

This is one of the proteins that bind and probably mediate the attachment of the 5S RNA into the large ribosomal subunit, where it forms part of the central protuberance. The polypeptide is Large ribosomal subunit protein uL18 (Lawsonia intracellularis (strain PHE/MN1-00)).